The sequence spans 107 residues: Large ribosomal subunit protein P2-A (107 aa).

Positions 85-107 (GAAAPAAAAEEEEDDDMGFGLFD) are disordered.

The protein belongs to the eukaryotic ribosomal protein P1/P2 family. In terms of assembly, P1 and P2 exist as dimers at the large ribosomal subunit. Post-translationally, phosphorylated.

Its function is as follows. Plays an important role in the elongation step of protein synthesis. The protein is Large ribosomal subunit protein P2-A of Trypanosoma cruzi.